The following is a 317-amino-acid chain: Ribosomal protein L11 methyltransferase (317 aa).

4 residues coordinate S-adenosyl-L-methionine: T158, G179, D201, and N244.

It belongs to the methyltransferase superfamily. PrmA family.

Its subcellular location is the cytoplasm. The catalysed reaction is L-lysyl-[protein] + 3 S-adenosyl-L-methionine = N(6),N(6),N(6)-trimethyl-L-lysyl-[protein] + 3 S-adenosyl-L-homocysteine + 3 H(+). Methylates ribosomal protein L11. This is Ribosomal protein L11 methyltransferase from Streptococcus equi subsp. zooepidemicus (strain H70).